The chain runs to 1116 residues: Auxin response factor 21 (1116 aa).

The segment at residues 132-234 (FCKTLTASDT…QLLLGIRRAN (103 aa)) is a DNA-binding region (TF-B3). A disordered region spans residues 763–812 (KTDDVPSTSTSPSTNSNPVLLQSIPSSSKNQSLTTAGKTSQSSVVLGPTI). A compositionally biased stretch (low complexity) spans 768 to 780 (PSTSTSPSTNSNP). Over residues 781 to 806 (VLLQSIPSSSKNQSLTTAGKTSQSSV) the composition is skewed to polar residues. Positions 998-1082 (RTYTKVHKRG…RCIRILSPQE (85 aa)) constitute a PB1 domain.

This sequence belongs to the ARF family. As to quaternary structure, homodimers and heterodimers. Expressed in roots, culms, leaves and young panicles.

Its subcellular location is the nucleus. Functionally, auxin response factors (ARFs) are transcriptional factors that bind specifically to the DNA sequence 5'-TGTCTC-3' found in the auxin-responsive promoter elements (AuxREs). The chain is Auxin response factor 21 (ARF21) from Oryza sativa subsp. japonica (Rice).